A 146-amino-acid polypeptide reads, in one-letter code: MGAFTEKQEALVNSSWEAFKGNIPQYSVVFYTSILEKAPAAKNLFSFLANGVDPTNPKLTAHAESLFGLVRDSAAQLRANGAVVADAALGSIHSQKALNDSQFLVVKEALLKTLKEAVGDKWTDELSTALELAYDEFAAGIKKAYA.

The 144-residue stretch at 3-146 folds into the Globin domain; it reads AFTEKQEALV…FAAGIKKAYA (144 aa). Nitrated tyrosine is present on residues Y26 and Y31. S46 serves as a coordination point for heme b. S46 carries the post-translational modification Phosphoserine. H62 is an O2 binding site. Residues H93 and K96 each contribute to the heme b site. Y134 carries the post-translational modification Nitrated tyrosine.

It belongs to the plant globin family. Monomer. Nitrated mainly at Tyr-31 and, to a lower extent, at Tyr-26 and Tyr-134, in effective nodules and particularly in hypoxic conditions; this mechanism may play a protective role in the symbiosis by buffering toxic peroxynitrite NO(2)(-). Nitration level decrease during nodule senescence. In terms of processing, phosphorylation at Ser-46 disrupts the molecular environment of its porphyrin ring oxygen binding pocket, thus leading to a reduced oxygen consumption and to the delivery of oxygen O(2) to symbiosomes. As to expression, root nodules.

The protein localises to the cytoplasm. The protein resides in the cytosol. Its subcellular location is the nucleus. Leghemoglobin that reversibly binds oxygen O(2) through a pentacoordinated heme iron. In root nodules, facilitates the diffusion of oxygen to the bacteroids while preventing the bacterial nitrogenase from being inactivated by buffering dioxygen, nitric oxide and carbon monoxide, and promoting the formation of reactive oxygen species (ROS, e.g. H(2)O(2)). This role is essential for symbiotic nitrogen fixation (SNF). The polypeptide is Leghemoglobin (Phaseolus vulgaris (Kidney bean)).